We begin with the raw amino-acid sequence, 320 residues long: 1-aminocyclopropane-1-carboxylate oxidase 3 (320 aa).

The stretch at 111–131 forms a coiled coil; sequence NEYRLAMKDFGKRLEILAEEL. Residues 155 to 256 form the Fe2OG dioxygenase domain; it reads GPTFATKLSN…RMSIASFYNP (102 aa). His180, Asp182, and His237 together coordinate Fe cation. Arg247 provides a ligand contact to 2-oxoglutarate.

Belongs to the iron/ascorbate-dependent oxidoreductase family. Requires Fe(2+) as cofactor.

It catalyses the reaction 1-aminocyclopropane-1-carboxylate + L-ascorbate + O2 = ethene + L-dehydroascorbate + hydrogen cyanide + CO2 + 2 H2O. Its pathway is alkene biosynthesis; ethylene biosynthesis via S-adenosyl-L-methionine; ethylene from S-adenosyl-L-methionine: step 2/2. Functionally, enzyme involved in the ethylene biosynthesis. May promote stem elongation by maximizing the extensibility cells, possibly by activating ethylene biosynthesis, in response to very-long-chain fatty acids (VLCFAs C20:0 to C30:0). In Arabidopsis thaliana (Mouse-ear cress), this protein is 1-aminocyclopropane-1-carboxylate oxidase 3.